A 284-amino-acid chain; its full sequence is Bifunctional protein FolD (284 aa).

NADP(+)-binding positions include 166–168 and isoleucine 232; that span reads GAS.

The protein belongs to the tetrahydrofolate dehydrogenase/cyclohydrolase family. Homodimer.

The catalysed reaction is (6R)-5,10-methylene-5,6,7,8-tetrahydrofolate + NADP(+) = (6R)-5,10-methenyltetrahydrofolate + NADPH. It carries out the reaction (6R)-5,10-methenyltetrahydrofolate + H2O = (6R)-10-formyltetrahydrofolate + H(+). It functions in the pathway one-carbon metabolism; tetrahydrofolate interconversion. In terms of biological role, catalyzes the oxidation of 5,10-methylenetetrahydrofolate to 5,10-methenyltetrahydrofolate and then the hydrolysis of 5,10-methenyltetrahydrofolate to 10-formyltetrahydrofolate. The polypeptide is Bifunctional protein FolD (Pseudoalteromonas translucida (strain TAC 125)).